A 233-amino-acid polypeptide reads, in one-letter code: Aquaglyceroporin AqpS (233 aa).

Transmembrane regions (helical) follow at residues Val11 to Ala31 and Leu40 to Leu60. The short motif at Asn69–Ala71 is the NPA 1 element. Transmembrane regions (helical) follow at residues Ala89–Phe109, Ala125–Ile145, and Val152–Phe172. Positions Asn174–Ala176 match the NPA 2 motif. The helical transmembrane segment at Gly193–Met213 threads the bilayer.

It belongs to the MIP/aquaporin (TC 1.A.8) family. NIP (TC 1.A.8.12) subfamily.

The protein localises to the cell inner membrane. In terms of biological role, involved in resistance to arsenic. Facilitates efflux of arsenite [As(III)]. Arsenate [As(V)] enters the cell through phosphate transport systems and is reduced to arsenite by the arsenate reductase ArsC. Internally generated arsenite flows out of the cell by downhill movement through AqpS. Can also transport the highly toxic methylarsenite [MAs(III)] and the relatively non-toxic methylarsenate [MAs(V)]. May be a component of an methylarsenite resistance pathway in which methylarsenite enters cells via AqpS, is oxidized by ArsH to methylarsenate, which exits the cells via AqpS. This pathway may confer a selective advantage for R.melliloti to grow in the presence of environmental methylarsenicals. The polypeptide is Aquaglyceroporin AqpS (Rhizobium meliloti (strain 1021) (Ensifer meliloti)).